The sequence spans 463 residues: A-type ATP synthase subunit B (463 aa).

Belongs to the ATPase alpha/beta chains family. As to quaternary structure, has multiple subunits with at least A(3), B(3), C, D, E, F, H, I and proteolipid K(x).

The protein localises to the cell membrane. Its function is as follows. Component of the A-type ATP synthase that produces ATP from ADP in the presence of a proton gradient across the membrane. The B chain is a regulatory subunit. This Saccharolobus islandicus (strain Y.N.15.51 / Yellowstone #2) (Sulfolobus islandicus) protein is A-type ATP synthase subunit B.